The chain runs to 84 residues: Putative membrane protein insertion efficiency factor (84 aa).

Residues 61 to 84 (SQGFEDPLPPNTKRTNLTHGRQTK) form a disordered region. Positions 72–84 (TKRTNLTHGRQTK) are enriched in polar residues.

The protein belongs to the UPF0161 family.

It localises to the cell inner membrane. Functionally, could be involved in insertion of integral membrane proteins into the membrane. In Leptospira borgpetersenii serovar Hardjo-bovis (strain JB197), this protein is Putative membrane protein insertion efficiency factor.